Consider the following 562-residue polypeptide: Arginine--tRNA ligase (562 aa).

The short motif at 121-131 (PNIAKPMGMGH) is the 'HIGH' region element.

It belongs to the class-I aminoacyl-tRNA synthetase family. In terms of assembly, monomer.

The protein localises to the cytoplasm. It catalyses the reaction tRNA(Arg) + L-arginine + ATP = L-arginyl-tRNA(Arg) + AMP + diphosphate. This Limosilactobacillus reuteri (strain DSM 20016) (Lactobacillus reuteri) protein is Arginine--tRNA ligase.